Consider the following 263-residue polypeptide: Purine nucleoside phosphorylase SAS1121 (263 aa).

3 residues coordinate Zn(2+): histidine 79, cysteine 124, and histidine 141.

Belongs to the purine nucleoside phosphorylase YfiH/LACC1 family. In terms of assembly, homodimer. It depends on Cu(2+) as a cofactor. The cofactor is Zn(2+).

The enzyme catalyses adenosine + phosphate = alpha-D-ribose 1-phosphate + adenine. The catalysed reaction is S-methyl-5'-thioadenosine + phosphate = 5-(methylsulfanyl)-alpha-D-ribose 1-phosphate + adenine. It carries out the reaction inosine + phosphate = alpha-D-ribose 1-phosphate + hypoxanthine. It catalyses the reaction adenosine + H2O + H(+) = inosine + NH4(+). In terms of biological role, purine nucleoside enzyme that catalyzes the phosphorolysis of adenosine and inosine nucleosides, yielding D-ribose 1-phosphate and the respective free bases, adenine and hypoxanthine. Also catalyzes the phosphorolysis of S-methyl-5'-thioadenosine into adenine and S-methyl-5-thio-alpha-D-ribose 1-phosphate. Also has adenosine deaminase activity. The sequence is that of Purine nucleoside phosphorylase SAS1121 from Staphylococcus aureus (strain MSSA476).